The chain runs to 362 residues: MTDLTTLEADVLAQVAAAGDLAALDAVRVSALGKTGRVSGLLKTLGAMSPDERKERGAAINVLRDRVQTALNDKKAALETAALDARLASETLDLTLPAPRRRKGSVHPTMQTMDEMVAIFAEMGFAVAEGPDIEDDFHNFTALNFPPKHPAREMHDTFFFNPAKNEDGSDGERMLLRTHTSPVQVRTMLSQKPPIRIIAPGRTYRCDNDATHTPVFHQVEGLVIDKAIHMGHLKWTLETFLARFFETDAVKTQFRPHHFPFTEPSAETDVQCDRSGGEIKVGQGTSWLEILGCGMVHPNVLRACGIDPDEYQGFAFGMGVDRLGMLKYGMPDLRDMWSSDGRWLAHYGFSAFAAPNAASGLS.

Glu-263 lines the Mg(2+) pocket.

Belongs to the class-II aminoacyl-tRNA synthetase family. Phe-tRNA synthetase alpha subunit type 1 subfamily. As to quaternary structure, tetramer of two alpha and two beta subunits. It depends on Mg(2+) as a cofactor.

It is found in the cytoplasm. The catalysed reaction is tRNA(Phe) + L-phenylalanine + ATP = L-phenylalanyl-tRNA(Phe) + AMP + diphosphate + H(+). This is Phenylalanine--tRNA ligase alpha subunit from Caulobacter sp. (strain K31).